The following is an 83-amino-acid chain: Small ribosomal subunit protein bS16 (83 aa).

Belongs to the bacterial ribosomal protein bS16 family.

The polypeptide is Small ribosomal subunit protein bS16 (Stutzerimonas stutzeri (strain A1501) (Pseudomonas stutzeri)).